The sequence spans 178 residues: ATP synthase subunit delta (178 aa).

Belongs to the ATPase delta chain family. In terms of assembly, F-type ATPases have 2 components, F(1) - the catalytic core - and F(0) - the membrane proton channel. F(1) has five subunits: alpha(3), beta(3), gamma(1), delta(1), epsilon(1). F(0) has three main subunits: a(1), b(2) and c(10-14). The alpha and beta chains form an alternating ring which encloses part of the gamma chain. F(1) is attached to F(0) by a central stalk formed by the gamma and epsilon chains, while a peripheral stalk is formed by the delta and b chains.

Its subcellular location is the cell membrane. In terms of biological role, f(1)F(0) ATP synthase produces ATP from ADP in the presence of a proton or sodium gradient. F-type ATPases consist of two structural domains, F(1) containing the extramembraneous catalytic core and F(0) containing the membrane proton channel, linked together by a central stalk and a peripheral stalk. During catalysis, ATP synthesis in the catalytic domain of F(1) is coupled via a rotary mechanism of the central stalk subunits to proton translocation. Its function is as follows. This protein is part of the stalk that links CF(0) to CF(1). It either transmits conformational changes from CF(0) to CF(1) or is implicated in proton conduction. This chain is ATP synthase subunit delta, found in Geobacillus stearothermophilus (Bacillus stearothermophilus).